The primary structure comprises 258 residues: Flap endonuclease Xni (258 aa).

A Mg(2+)-binding site is contributed by Asp-109. A 5'-3' exonuclease domain is found at 165-254 (VKPEQLPDYW…GFNLQDIRYL (90 aa)). The K(+) site is built by Leu-176, Ala-177, Pro-185, Ile-187, and Ile-190. Residues 189 to 194 (GIGPKA) are interaction with DNA.

It belongs to the Xni family. Mg(2+) is required as a cofactor. It depends on K(+) as a cofactor.

In terms of biological role, has flap endonuclease activity. During DNA replication, flap endonucleases cleave the 5'-overhanging flap structure that is generated by displacement synthesis when DNA polymerase encounters the 5'-end of a downstream Okazaki fragment. This is Flap endonuclease Xni from Photobacterium profundum (strain SS9).